The following is a 163-amino-acid chain: Regulatory protein RecX (163 aa).

The disordered stretch occupies residues 1-21 (MSDAEDIPTGRKRRPREQTPV).

This sequence belongs to the RecX family.

It is found in the cytoplasm. Its function is as follows. Modulates RecA activity. In Stenotrophomonas maltophilia (strain K279a), this protein is Regulatory protein RecX.